The primary structure comprises 428 residues: Probable dual-specificity RNA methyltransferase RlmN 2 (428 aa).

The active-site Proton acceptor is the E142. The region spanning 148 to 414 is the Radical SAM core domain; sequence FAGRATACVS…STVRQRRGID (267 aa). C155 and C419 form a disulfide bridge. The [4Fe-4S] cluster site is built by C162, C166, and C169. Residues 207-228 are compositionally biased toward basic and acidic residues; sequence MRDPSPGREAGEKSRDEADRHR. Residues 207–232 form a disordered region; the sequence is MRDPSPGREAGEKSRDEADRHRAPPT. Residues 244–245, S276, 299–301, and N375 each bind S-adenosyl-L-methionine; these read GE and SLH. C419 functions as the S-methylcysteine intermediate in the catalytic mechanism.

It belongs to the radical SAM superfamily. RlmN family. [4Fe-4S] cluster is required as a cofactor.

It localises to the cytoplasm. It carries out the reaction adenosine(2503) in 23S rRNA + 2 reduced [2Fe-2S]-[ferredoxin] + 2 S-adenosyl-L-methionine = 2-methyladenosine(2503) in 23S rRNA + 5'-deoxyadenosine + L-methionine + 2 oxidized [2Fe-2S]-[ferredoxin] + S-adenosyl-L-homocysteine. It catalyses the reaction adenosine(37) in tRNA + 2 reduced [2Fe-2S]-[ferredoxin] + 2 S-adenosyl-L-methionine = 2-methyladenosine(37) in tRNA + 5'-deoxyadenosine + L-methionine + 2 oxidized [2Fe-2S]-[ferredoxin] + S-adenosyl-L-homocysteine. In terms of biological role, specifically methylates position 2 of adenine 2503 in 23S rRNA and position 2 of adenine 37 in tRNAs. This Opitutus terrae (strain DSM 11246 / JCM 15787 / PB90-1) protein is Probable dual-specificity RNA methyltransferase RlmN 2.